The following is a 716-amino-acid chain: Fatty acid oxidation complex subunit alpha (716 aa).

The segment at 1–189 (MIYQSPTIQV…KVGAIDAVVA (189 aa)) is enoyl-CoA hydratase/isomerase. Position 296 (Asp-296) interacts with substrate. The 3-hydroxyacyl-CoA dehydrogenase stretch occupies residues 311–716 (KDVNQAAVLG…AANNGSYYQA (406 aa)). Residues Met-324, Asp-343, 400–402 (VVE), Lys-407, and Ser-429 contribute to the NAD(+) site. Catalysis depends on His-450, which acts as the For 3-hydroxyacyl-CoA dehydrogenase activity. Position 453 (Asn-453) interacts with NAD(+). Residues Asn-500 and Tyr-660 each coordinate substrate.

In the N-terminal section; belongs to the enoyl-CoA hydratase/isomerase family. This sequence in the C-terminal section; belongs to the 3-hydroxyacyl-CoA dehydrogenase family. Heterotetramer of two alpha chains (FadB) and two beta chains (FadA).

The catalysed reaction is a (3S)-3-hydroxyacyl-CoA + NAD(+) = a 3-oxoacyl-CoA + NADH + H(+). It carries out the reaction a (3S)-3-hydroxyacyl-CoA = a (2E)-enoyl-CoA + H2O. The enzyme catalyses a 4-saturated-(3S)-3-hydroxyacyl-CoA = a (3E)-enoyl-CoA + H2O. It catalyses the reaction (3S)-3-hydroxybutanoyl-CoA = (3R)-3-hydroxybutanoyl-CoA. The catalysed reaction is a (3Z)-enoyl-CoA = a 4-saturated (2E)-enoyl-CoA. It carries out the reaction a (3E)-enoyl-CoA = a 4-saturated (2E)-enoyl-CoA. The protein operates within lipid metabolism; fatty acid beta-oxidation. Its function is as follows. Involved in the aerobic and anaerobic degradation of long-chain fatty acids via beta-oxidation cycle. Catalyzes the formation of 3-oxoacyl-CoA from enoyl-CoA via L-3-hydroxyacyl-CoA. It can also use D-3-hydroxyacyl-CoA and cis-3-enoyl-CoA as substrate. In Shewanella frigidimarina (strain NCIMB 400), this protein is Fatty acid oxidation complex subunit alpha.